Here is a 972-residue protein sequence, read N- to C-terminus: mRNA transport regulator MTR10 (972 aa).

The protein localises to the nucleus. Its function is as follows. Involved in mRNA transport from nucleus to cytoplasm. The chain is mRNA transport regulator MTR10 (MTR10) from Saccharomyces cerevisiae (strain ATCC 204508 / S288c) (Baker's yeast).